Reading from the N-terminus, the 620-residue chain is Glutathione-regulated potassium-efflux system protein KefC (620 aa).

The next 12 membrane-spanning stretches (helical) occupy residues 4 to 24, 26 to 46, 54 to 74, 90 to 110, 114 to 134, 149 to 169, 178 to 198, 218 to 238, 270 to 290, 294 to 314, 327 to 347, and 359 to 379; these read HTLL…PIAV, LGLG…PWGL, SILH…GLEL, GALQ…FLGL, VAEL…MQAM, FAVL…IPLL, LGAF…VVLL, VFSA…EEVG, GLLL…GTLV, LRIL…LWLV, WFAV…GAAQ, and ALTL…MLLT. An RCK N-terminal domain is found at 399-518; it reads QPRVIVAGFG…AGVAMPERET (120 aa). The interval 599–620 is disordered; that stretch reads QGTAEGKHSGEAADEPEVKPSI.

Belongs to the monovalent cation:proton antiporter 2 (CPA2) transporter (TC 2.A.37) family. KefC subfamily. In terms of assembly, homodimer. Interacts with the regulatory subunit KefF.

The protein resides in the cell inner membrane. Its function is as follows. Pore-forming subunit of a potassium efflux system that confers protection against electrophiles. Catalyzes K(+)/H(+) antiport. In Salmonella heidelberg (strain SL476), this protein is Glutathione-regulated potassium-efflux system protein KefC.